The following is a 170-amino-acid chain: Ubiquitin-conjugating enzyme E2 G1 (170 aa).

At methionine 1 the chain carries N-acetylmethionine. N-acetylthreonine; in Ubiquitin-conjugating enzyme E2 G1, N-terminally processed is present on threonine 2. Residues 5-166 (QSALLLRRQL…VARCVRKSQE (162 aa)) form the UBC core domain. Cysteine 90 (glycyl thioester intermediate) is an active-site residue.

This sequence belongs to the ubiquitin-conjugating enzyme family. In terms of processing, autoubiquitinated in vitro. Widely expressed, mainly in skeletal muscle.

It carries out the reaction S-ubiquitinyl-[E1 ubiquitin-activating enzyme]-L-cysteine + [E2 ubiquitin-conjugating enzyme]-L-cysteine = [E1 ubiquitin-activating enzyme]-L-cysteine + S-ubiquitinyl-[E2 ubiquitin-conjugating enzyme]-L-cysteine.. The protein operates within protein modification; protein ubiquitination. Its function is as follows. Accepts ubiquitin from the E1 complex and catalyzes its covalent attachment to other proteins. In vitro catalyzes 'Lys-48'-, as well as 'Lys-63'-linked polyubiquitination. May be involved in degradation of muscle-specific proteins. Mediates polyubiquitination of CYP3A4. This chain is Ubiquitin-conjugating enzyme E2 G1 (UBE2G1), found in Homo sapiens (Human).